Reading from the N-terminus, the 129-residue chain is Insulin-like growth factor 2 (129 aa).

A signal peptide spans 1-24 (MGVPMGKSLLAPLTFLALASCCFA). The tract at residues 25–52 (AYRPSETLCGGELVDTLQFVCGDRGFYF) is b. 3 cysteine pairs are disulfide-bonded: cysteine 33/cysteine 72, cysteine 45/cysteine 85, and cysteine 71/cysteine 76. The interval 53–65 (SRPASRVSRRSSR) is c. Residues 66-86 (GIVEECCFRSCDLALLETYCA) form an a region. Residues 87–92 (TPAKSE) form a d region. Residues 93 to 129 (RDVSTPPTVLPDNFPRYPVGKFFQYDTWKQSAQRLRR) constitute a propeptide, e peptide.

It belongs to the insulin family. As to quaternary structure, interacts with MYORG; this interaction is required for IGF2 secretion. Interacts with integrins ITGAV:ITGB3 and ITGA6:ITGB4; integrin-binding is required for IGF2 signaling. Proteolytically processed by PCSK4, proIGF2 is cleaved at Arg-129 and Arg-92 to generate big-IGF2 and mature IGF2.

The protein localises to the secreted. The insulin-like growth factors possess growth-promoting activity. Major fetal growth hormone in mammals. Plays a key role in regulating fetoplacental development. IGF2 is influenced by placental lactogen. Also involved in tissue differentiation. In adults, involved in glucose metabolism in adipose tissue, skeletal muscle and liver. Acts as a ligand for integrin which is required for IGF2 signaling. Positively regulates myogenic transcription factor MYOD1 function by facilitating the recruitment of transcriptional coactivators, thereby controlling muscle terminal differentiation. Inhibits myoblast differentiation and modulates metabolism via increasing the mitochondrial respiration rate. Functionally, preptin undergoes glucose-mediated co-secretion with insulin, and acts as a physiological amplifier of glucose-mediated insulin secretion. Exhibits osteogenic properties by increasing osteoblast mitogenic activity through phosphoactivation of MAPK1 and MAPK3. This is Insulin-like growth factor 2 from Neovison vison (American mink).